The sequence spans 322 residues: Large ribosomal subunit protein uL15m (322 aa).

The transit peptide at 1-57 directs the protein to the mitochondrion; it reads MKAERQTGLRNSFTTVIGRKLINTFVPSMMLTSVAGNDIFFRGLFKSPVLAFQSYRY. Positions 69–99 are disordered; the sequence is GSTKSFKRLGRGPSSGLGKTSGRGQKGQKAR. Residues 81-93 are compositionally biased toward gly residues; that stretch reads PSSGLGKTSGRGQ.

This sequence belongs to the universal ribosomal protein uL15 family. Component of the mitochondrial large ribosomal subunit (mt-LSU). Mature yeast 74S mitochondrial ribosomes consist of a small (37S) and a large (54S) subunit. The 37S small subunit contains a 15S ribosomal RNA (15S mt-rRNA) and 34 different proteins. The 54S large subunit contains a 21S rRNA (21S mt-rRNA) and 46 different proteins.

It localises to the mitochondrion. Its function is as follows. Component of the mitochondrial ribosome (mitoribosome), a dedicated translation machinery responsible for the synthesis of mitochondrial genome-encoded proteins, including at least some of the essential transmembrane subunits of the mitochondrial respiratory chain. The mitoribosomes are attached to the mitochondrial inner membrane and translation products are cotranslationally integrated into the membrane. This Saccharomyces cerevisiae (strain ATCC 204508 / S288c) (Baker's yeast) protein is Large ribosomal subunit protein uL15m (MRPL10).